The chain runs to 621 residues: Intermediate filament protein ifc-2 (621 aa).

A head region spans residues 20–55 (SGAYTSGFGGLVSGMSSAGAICTTQIRDAREREKRE). Residues 52-400 (EKREIGLLND…VLLNGANVTT (349 aa)) enclose the IF rod domain. The coil 1A stretch occupies residues 56-87 (IGLLNDRLADYIEKVRFLEAQNQCLSHDIDIL). The interval 88 to 100 (RRGFSGGGHVSGL) is linker 1. Positions 101–238 (YDTEIAQAKR…TENSTRIEQE (138 aa)) are coil 1B. Residues 239-256 (LVFIRRDTTAENRDYFRH) are linker 12. Residues 257–400 (ELQAAIRDIR…VLLNGANVTT (144 aa)) are coil 2. The interval 401-549 (YVSNTHPSGV…RVDVGGFRVE (149 aa)) is tail. Residues 508-621 (SGRSFHSWYL…EERAWFVYLN (114 aa)) enclose the LTD domain.

The protein belongs to the intermediate filament family.

It localises to the cytoplasm. Cytoplasmic intermediate filaments provide mechanical strength to cells. The chain is Intermediate filament protein ifc-2 from Caenorhabditis briggsae.